A 513-amino-acid chain; its full sequence is ATP synthase subunit alpha 1 (513 aa).

Residue 169-176 participates in ATP binding; sequence GDRQTGKT.

This sequence belongs to the ATPase alpha/beta chains family. F-type ATPases have 2 components, CF(1) - the catalytic core - and CF(0) - the membrane proton channel. CF(1) has five subunits: alpha(3), beta(3), gamma(1), delta(1), epsilon(1). CF(0) has three main subunits: a(1), b(2) and c(9-12). The alpha and beta chains form an alternating ring which encloses part of the gamma chain. CF(1) is attached to CF(0) by a central stalk formed by the gamma and epsilon chains, while a peripheral stalk is formed by the delta and b chains.

The protein localises to the cell inner membrane. It carries out the reaction ATP + H2O + 4 H(+)(in) = ADP + phosphate + 5 H(+)(out). Its function is as follows. Produces ATP from ADP in the presence of a proton gradient across the membrane. The alpha chain is a regulatory subunit. The polypeptide is ATP synthase subunit alpha 1 (Nitrosomonas eutropha (strain DSM 101675 / C91 / Nm57)).